The chain runs to 322 residues: Adenine deaminase (322 aa).

Positions 11, 13, and 189 each coordinate Zn(2+). The Proton donor role is filled by Glu192. Asp270 provides a ligand contact to Zn(2+). Asp271 serves as a coordination point for substrate.

Belongs to the metallo-dependent hydrolases superfamily. Adenosine and AMP deaminases family. Adenine deaminase type 2 subfamily. Zn(2+) is required as a cofactor.

It carries out the reaction adenine + H2O + H(+) = hypoxanthine + NH4(+). Its function is as follows. Catalyzes the hydrolytic deamination of adenine to hypoxanthine. Plays an important role in the purine salvage pathway and in nitrogen catabolism. This is Adenine deaminase from Rhizobium johnstonii (strain DSM 114642 / LMG 32736 / 3841) (Rhizobium leguminosarum bv. viciae).